The chain runs to 311 residues: Bifunctional protein FolD (311 aa).

174–176 is an NADP(+) binding site; that stretch reads GKG.

Belongs to the tetrahydrofolate dehydrogenase/cyclohydrolase family. Homodimer.

The catalysed reaction is (6R)-5,10-methylene-5,6,7,8-tetrahydrofolate + NADP(+) = (6R)-5,10-methenyltetrahydrofolate + NADPH. It catalyses the reaction (6R)-5,10-methenyltetrahydrofolate + H2O = (6R)-10-formyltetrahydrofolate + H(+). The protein operates within one-carbon metabolism; tetrahydrofolate interconversion. Functionally, catalyzes the oxidation of 5,10-methylenetetrahydrofolate to 5,10-methenyltetrahydrofolate and then the hydrolysis of 5,10-methenyltetrahydrofolate to 10-formyltetrahydrofolate. The sequence is that of Bifunctional protein FolD from Pyrobaculum aerophilum (strain ATCC 51768 / DSM 7523 / JCM 9630 / CIP 104966 / NBRC 100827 / IM2).